We begin with the raw amino-acid sequence, 708 residues long: Kelch-like protein 11 (708 aa).

A signal peptide spans 1–15 (MAAAAVAAAAAAAAA). Residues 47-70 (DFGPGPGISAMEASGGDPGPEAED) form a disordered region. The 77-residue stretch at 94–170 (CDITLCFGGA…MYTGRIRVST (77 aa)) folds into the BTB domain. Residues 205 to 307 (CVAIHSLAHM…KPTYLTRHVK (103 aa)) form the BACK domain. 5 Kelch repeats span residues 360–407 (VIMV…VTES), 408–453 (YVYV…EVKG), 455–501 (LYSI…AIED), 503–556 (FVYI…VVNS), and 610–661 (DVFI…HVRI). Phosphoserine is present on Ser465.

Component of a cullin-RING-based BCR (BTB-CUL3-RBX1) E3 ubiquitin-protein ligase complex. Homodimer. Interacts with CUL3.

Its function is as follows. Component of a cullin-RING-based BCR (BTB-CUL3-RBX1) E3 ubiquitin-protein ligase complex that mediates the ubiquitination of target proteins, leading most often to their proteasomal degradation. The chain is Kelch-like protein 11 (KLHL11) from Homo sapiens (Human).